Here is a 115-residue protein sequence, read N- to C-terminus: MIQVLLVIICLAVFPYQGSSIILESGNINDYEIVYPKKVAVLPTGAMNSVHPCCDPVTCEPREGEHCISGPCCRNCKFLNAGTICKKAMLDGLNDYCTGISSDCPRNRYKGKEDD.

A signal peptide spans 1–20; that stretch reads MIQVLLVIICLAVFPYQGSS. The propeptide occupies 21 to 47; the sequence is IILESGNINDYEIVYPKKVAVLPTGAM. One can recognise a Disintegrin domain in the interval 48–112; the sequence is NSVHPCCDPV…DCPRNRYKGK (65 aa). 4 cysteine pairs are disulfide-bonded: C53-C76, C67-C73, C72-C97, and C85-C104. A Cell attachment site; atypical (MLD) motif is present at residues 89–91; it reads MLD.

Belongs to the disintegrin family. Dimeric disintegrin subfamily. Heterodimer with subunit beta; disulfide-linked. Expressed by the venom gland.

It is found in the secreted. In terms of biological role, potently inhibits adhesion of alpha-4/beta-1 (ITGA4/ITGB1) and alpha-9/beta-1 (ITGA9/ITGB1) integrins to VCAM1, and adhesion of alpha-5/beta-1 (ITGA5/ITGB1) integrin to fibronectin. Has a much less effect on alpha-IIb/beta-3 (ITGA2B/ITGB3) integrin. Also potently inhibits neutrophil migration across TNF-alpha-activated human umbilical endothelial cells. The polypeptide is Disintegrin EC6 subunit alpha (Echis carinatus sochureki (Saw-scaled viper)).